The following is a 179-amino-acid chain: Large ribosomal subunit protein uL5 (179 aa).

This sequence belongs to the universal ribosomal protein uL5 family. In terms of assembly, part of the 50S ribosomal subunit; part of the 5S rRNA/L5/L18/L25 subcomplex. Contacts the 5S rRNA and the P site tRNA. Forms a bridge to the 30S subunit in the 70S ribosome.

Its function is as follows. This is one of the proteins that bind and probably mediate the attachment of the 5S RNA into the large ribosomal subunit, where it forms part of the central protuberance. In the 70S ribosome it contacts protein S13 of the 30S subunit (bridge B1b), connecting the 2 subunits; this bridge is implicated in subunit movement. Contacts the P site tRNA; the 5S rRNA and some of its associated proteins might help stabilize positioning of ribosome-bound tRNAs. This is Large ribosomal subunit protein uL5 from Staphylococcus carnosus (strain TM300).